A 107-amino-acid polypeptide reads, in one-letter code: uncharacterized protein (107 aa).

A compositionally biased stretch (polar residues) spans 1-14; sequence MTERNASGRMNTKG. The interval 1 to 20 is disordered; that stretch reads MTERNASGRMNTKGRSIKET.

It is found in the mitochondrion. This is an uncharacterized protein from Arabidopsis thaliana (Mouse-ear cress).